Consider the following 593-residue polypeptide: Uroporphyrinogen-III C-methyltransferase (593 aa).

The disordered stretch occupies residues 278–303 (ETSSSPNKKTKQETVTEGVVPPTDEN).

It belongs to the precorrin methyltransferase family.

It catalyses the reaction uroporphyrinogen III + 2 S-adenosyl-L-methionine = precorrin-2 + 2 S-adenosyl-L-homocysteine + H(+). Functionally, siroheme synthase involved in methionine biosynthesis. This Saccharomyces cerevisiae (strain ATCC 204508 / S288c) (Baker's yeast) protein is Uroporphyrinogen-III C-methyltransferase.